A 190-amino-acid chain; its full sequence is Large ribosomal subunit protein uL5 (190 aa).

The protein belongs to the universal ribosomal protein uL5 family. As to quaternary structure, part of the 50S ribosomal subunit; part of the 5S rRNA/L5/L18/L25 subcomplex. Contacts the 5S rRNA and the P site tRNA. Forms a bridge to the 30S subunit in the 70S ribosome.

Functionally, this is one of the proteins that bind and probably mediate the attachment of the 5S RNA into the large ribosomal subunit, where it forms part of the central protuberance. In the 70S ribosome it contacts protein S13 of the 30S subunit (bridge B1b), connecting the 2 subunits; this bridge is implicated in subunit movement. Contacts the P site tRNA; the 5S rRNA and some of its associated proteins might help stabilize positioning of ribosome-bound tRNAs. In Blochmanniella floridana, this protein is Large ribosomal subunit protein uL5.